Consider the following 503-residue polypeptide: ATP synthase subunit alpha (503 aa).

Residue Gly-170 to Thr-177 coordinates ATP.

Belongs to the ATPase alpha/beta chains family. In terms of assembly, F-type ATPases have 2 components, CF(1) - the catalytic core - and CF(0) - the membrane proton channel. CF(1) has five subunits: alpha(3), beta(3), gamma(1), delta(1), epsilon(1). CF(0) has three main subunits: a(1), b(2) and c(9-12). The alpha and beta chains form an alternating ring which encloses part of the gamma chain. CF(1) is attached to CF(0) by a central stalk formed by the gamma and epsilon chains, while a peripheral stalk is formed by the delta and b chains.

It localises to the cell inner membrane. It carries out the reaction ATP + H2O + 4 H(+)(in) = ADP + phosphate + 5 H(+)(out). Its function is as follows. Produces ATP from ADP in the presence of a proton gradient across the membrane. The alpha chain is a regulatory subunit. The protein is ATP synthase subunit alpha of Geobacter sulfurreducens (strain ATCC 51573 / DSM 12127 / PCA).